The following is a 436-amino-acid chain: UDP-N-acetylmuramate--L-alanine ligase (436 aa).

ATP is bound at residue 111–117 (GTHGKTS).

It belongs to the MurCDEF family.

The protein resides in the cytoplasm. The catalysed reaction is UDP-N-acetyl-alpha-D-muramate + L-alanine + ATP = UDP-N-acetyl-alpha-D-muramoyl-L-alanine + ADP + phosphate + H(+). Its pathway is cell wall biogenesis; peptidoglycan biosynthesis. In terms of biological role, cell wall formation. The protein is UDP-N-acetylmuramate--L-alanine ligase of Pediococcus pentosaceus (strain ATCC 25745 / CCUG 21536 / LMG 10740 / 183-1w).